A 227-amino-acid chain; its full sequence is Cytochrome c oxidase subunit 2 (227 aa).

Residues 1 to 14 (MAYPFQLGLQDASS) lie on the Mitochondrial intermembrane side of the membrane. A helical membrane pass occupies residues 15–45 (PIMEELTNFHDHTLMIVFLISSLVLYIISSM). At 46 to 59 (LTTKMTHTSTMDAQ) the chain is on the mitochondrial matrix side. A helical transmembrane segment spans residues 60-87 (EVETIWTVLPAVILILIALPSLRILYMM). Over 88-227 (DEINNPVLTV…HFENWSTSMI (140 aa)) the chain is Mitochondrial intermembrane. His-161, Cys-196, Glu-198, Cys-200, His-204, and Met-207 together coordinate Cu cation. Residue Glu-198 participates in Mg(2+) binding.

This sequence belongs to the cytochrome c oxidase subunit 2 family. As to quaternary structure, component of the cytochrome c oxidase (complex IV, CIV), a multisubunit enzyme composed of 14 subunits. The complex is composed of a catalytic core of 3 subunits MT-CO1, MT-CO2 and MT-CO3, encoded in the mitochondrial DNA, and 11 supernumerary subunits COX4I, COX5A, COX5B, COX6A, COX6B, COX6C, COX7A, COX7B, COX7C, COX8 and NDUFA4, which are encoded in the nuclear genome. The complex exists as a monomer or a dimer and forms supercomplexes (SCs) in the inner mitochondrial membrane with NADH-ubiquinone oxidoreductase (complex I, CI) and ubiquinol-cytochrome c oxidoreductase (cytochrome b-c1 complex, complex III, CIII), resulting in different assemblies (supercomplex SCI(1)III(2)IV(1) and megacomplex MCI(2)III(2)IV(2)). Found in a complex with TMEM177, COA6, COX18, COX20, SCO1 and SCO2. Interacts with TMEM177 in a COX20-dependent manner. Interacts with COX20. Interacts with COX16. The cofactor is Cu cation.

The protein localises to the mitochondrion inner membrane. It carries out the reaction 4 Fe(II)-[cytochrome c] + O2 + 8 H(+)(in) = 4 Fe(III)-[cytochrome c] + 2 H2O + 4 H(+)(out). In terms of biological role, component of the cytochrome c oxidase, the last enzyme in the mitochondrial electron transport chain which drives oxidative phosphorylation. The respiratory chain contains 3 multisubunit complexes succinate dehydrogenase (complex II, CII), ubiquinol-cytochrome c oxidoreductase (cytochrome b-c1 complex, complex III, CIII) and cytochrome c oxidase (complex IV, CIV), that cooperate to transfer electrons derived from NADH and succinate to molecular oxygen, creating an electrochemical gradient over the inner membrane that drives transmembrane transport and the ATP synthase. Cytochrome c oxidase is the component of the respiratory chain that catalyzes the reduction of oxygen to water. Electrons originating from reduced cytochrome c in the intermembrane space (IMS) are transferred via the dinuclear copper A center (CU(A)) of subunit 2 and heme A of subunit 1 to the active site in subunit 1, a binuclear center (BNC) formed by heme A3 and copper B (CU(B)). The BNC reduces molecular oxygen to 2 water molecules using 4 electrons from cytochrome c in the IMS and 4 protons from the mitochondrial matrix. This chain is Cytochrome c oxidase subunit 2 (MT-CO2), found in Lophuromys flavopunctatus (Yellow-spotted brush-furred rat).